Consider the following 296-residue polypeptide: NAD kinase (296 aa).

The Proton acceptor role is filled by Asp-74. NAD(+) is bound by residues 74–75 (DG), 148–149 (ND), Arg-176, Asp-178, and 189–194 (TAYALS).

It belongs to the NAD kinase family. It depends on a divalent metal cation as a cofactor.

The protein localises to the cytoplasm. It carries out the reaction NAD(+) + ATP = ADP + NADP(+) + H(+). In terms of biological role, involved in the regulation of the intracellular balance of NAD and NADP, and is a key enzyme in the biosynthesis of NADP. Catalyzes specifically the phosphorylation on 2'-hydroxyl of the adenosine moiety of NAD to yield NADP. In Nitrosomonas eutropha (strain DSM 101675 / C91 / Nm57), this protein is NAD kinase.